The primary structure comprises 567 residues: Malate synthase, glyoxysomal (567 aa).

Arg-182 acts as the Proton acceptor in catalysis. Asp-468 (proton donor) is an active-site residue. The Microbody targeting signal signature appears at 565-567 (SRL).

This sequence belongs to the malate synthase family.

The protein localises to the glyoxysome. It carries out the reaction glyoxylate + acetyl-CoA + H2O = (S)-malate + CoA + H(+). It participates in carbohydrate metabolism; glyoxylate cycle; (S)-malate from isocitrate: step 2/2. This Ricinus communis (Castor bean) protein is Malate synthase, glyoxysomal.